Consider the following 975-residue polypeptide: MGVPAFFRWLTKKYPATVVNANEDRQRDQDGNRVPVDCTQPNPNFQEFDNLYLDMNGIIHPCTHPEDRPAPKNEDEMFALIFEYIDRIYSIVRPRRLLYMAIDGVAPRAKMNQQRSRRFRASKEMAEKEASIEEQRNRLMAEGIAVPPKKKEEAHFDSNCITPGTPFMARLADALRYYIHDRVTNDASWANIEIILSDANVPGEGEHKIMDYVRKQRGNPAHDPNTVHCLCGADADLIMLGIATHEANFNIIREEFVPNQPRACDLCGQYGHELKECRGAENETDLGDDYCKPEQREKNFIFLRIPVLREYLEKELSMPNLPFKFDVERALDDWVFLCFFVGNDFLPHLPSLEIREGAIDRLIKLYKEMVYQMKGYLTKDGIPELDRVEMIMKGLGRVEDEIFKRRQQDEERFQENQRNKKARMQMYGGGGRGGRGRGRGRGQQPAFVPTHGILAPMAAPMHHSGESTRQMASEARQTAMKFTNDANETAAANLKALLNVKGEESPADIASRKRKAEQPLIKPEEEEDEGPKDDIRLYESGWKDRYYRAKFDVGSDDIEFRHRVAWAYVEGLCWVLRYYYQGCASWDWYFPYHYAPFASDFETVGEFQPDFTRPTKPFNPLEQLMSVFPAASKQHLPVEWQKLMIQDDSPIIDLYPADFRIDLNGKKYAWQGVALLPFVDETRLLATLQSVYPTLTAEEKQRNTRGPNRIFIGRNHKSFEFFQQVAESKSDDLVPLDPTLLNGVSGKIAYDSTATAPGLPFVSPVNHDECQDLPTNCGICVLYEDPEYPQDYIFPALRLDGAKEPEKTLKPDDWNDRRDGRYQPQVGFNRNAPRGSLDQSGHRQVHHYVRGGGGGGGGYRGNSYDDRRGGGGGGGGYNDRQDFGRNYGGRDGGGPQRYHDQQQQRQGGYQGGGYGGGYGGGGGGGGGGGGGSYHQPYNQDQRRGGRGGGGGPPGYQRPPYRGGGGGGYHGNSSWR.

The CCHC-type zinc-finger motif lies at 262–279; the sequence is RACDLCGQYGHELKECRG. Disordered regions lie at residues 424-443 and 505-532; these read MQMYGGGGRGGRGRGRGRGQ and SPADIASRKRKAEQPLIKPEEEEDEGPK. An interaction with paxt-1 region spans residues 534 to 787; sequence DIRLYESGWK…GICVLYEDPE (254 aa). Basic and acidic residues predominate over residues 804 to 821; the sequence is EPEKTLKPDDWNDRRDGR. The segment at 804–975 is disordered; it reads EPEKTLKPDD…GGYHGNSSWR (172 aa). 3 stretches are compositionally biased toward gly residues: residues 850–860, 886–895, and 908–932; these read RGGGGGGGGYR, NYGGRDGGGP, and GYQGGGYGGGYGGGGGGGGGGGGGS.

It belongs to the 5'-3' exonuclease family. XRN2/RAT1 subfamily. Interacts with paxt-1 (via N-terminus); the interaction is direct and results in stabilization of xrn-2 in the complex. As to expression, expressed in the pharyngeal myoepithelium and intestine. Also expressed in several anterior neurons including the sensory neurons, as well as the interneuron PVT and the pharyngeal motorneuron M5.

The protein resides in the nucleus. In terms of biological role, possesses 5'-&gt;3' exoribonuclease activity. Plays a role in maintenance of steady-state concentration and turnover of microRNAs (miRNA) by degradation of mature miRNA. Degradation role is enhanced when in complex with paxt-1. Partially redundant to xrn-1 in miRNA guide strand degradation. Implicated in differential regulation of mRNAs such as let-7 by controlling the accumulation of mature miRNA. Positively regulates molting of the pharyngeal cuticle. The chain is 5'-3' exoribonuclease 2 homolog from Caenorhabditis elegans.